The primary structure comprises 457 residues: Bifunctional protein GlmU (457 aa).

Residues 1 to 229 (MSNSAKSVVI…HSEMEGVNNR (229 aa)) form a pyrophosphorylase region. UDP-N-acetyl-alpha-D-glucosamine contacts are provided by residues 11–14 (LAAG), Lys-25, Gln-76, 81–82 (GT), 103–105 (YGD), Gly-140, Glu-154, Asn-169, and Asn-227. Asp-105 is a binding site for Mg(2+). A Mg(2+)-binding site is contributed by Asn-227. Positions 230 to 250 (LQLAALERIYQTEQAERLLLE) are linker. Residues 251-457 (GVMLLDPARF…GWKRPVKKKQ (207 aa)) are N-acetyltransferase. UDP-N-acetyl-alpha-D-glucosamine is bound by residues Arg-333 and Lys-351. His-363 (proton acceptor) is an active-site residue. Tyr-366 and Asn-377 together coordinate UDP-N-acetyl-alpha-D-glucosamine. Residues Ala-380, 386 to 387 (NY), Ser-405, Ala-423, and Arg-440 contribute to the acetyl-CoA site.

This sequence in the N-terminal section; belongs to the N-acetylglucosamine-1-phosphate uridyltransferase family. The protein in the C-terminal section; belongs to the transferase hexapeptide repeat family. As to quaternary structure, homotrimer. Mg(2+) serves as cofactor.

The protein resides in the cytoplasm. It catalyses the reaction alpha-D-glucosamine 1-phosphate + acetyl-CoA = N-acetyl-alpha-D-glucosamine 1-phosphate + CoA + H(+). The catalysed reaction is N-acetyl-alpha-D-glucosamine 1-phosphate + UTP + H(+) = UDP-N-acetyl-alpha-D-glucosamine + diphosphate. The protein operates within nucleotide-sugar biosynthesis; UDP-N-acetyl-alpha-D-glucosamine biosynthesis; N-acetyl-alpha-D-glucosamine 1-phosphate from alpha-D-glucosamine 6-phosphate (route II): step 2/2. It functions in the pathway nucleotide-sugar biosynthesis; UDP-N-acetyl-alpha-D-glucosamine biosynthesis; UDP-N-acetyl-alpha-D-glucosamine from N-acetyl-alpha-D-glucosamine 1-phosphate: step 1/1. It participates in bacterial outer membrane biogenesis; LPS lipid A biosynthesis. Functionally, catalyzes the last two sequential reactions in the de novo biosynthetic pathway for UDP-N-acetylglucosamine (UDP-GlcNAc). The C-terminal domain catalyzes the transfer of acetyl group from acetyl coenzyme A to glucosamine-1-phosphate (GlcN-1-P) to produce N-acetylglucosamine-1-phosphate (GlcNAc-1-P), which is converted into UDP-GlcNAc by the transfer of uridine 5-monophosphate (from uridine 5-triphosphate), a reaction catalyzed by the N-terminal domain. This is Bifunctional protein GlmU from Proteus mirabilis (strain HI4320).